The following is a 126-amino-acid chain: Glycine cleavage system H protein (126 aa).

The region spanning 23 to 104 (KVRVGITDFA…YDEGWMIEII (82 aa)) is the Lipoyl-binding domain. Lysine 64 bears the N6-lipoyllysine mark.

It belongs to the GcvH family. The glycine cleavage system is composed of four proteins: P, T, L and H. (R)-lipoate serves as cofactor.

The glycine cleavage system catalyzes the degradation of glycine. The H protein shuttles the methylamine group of glycine from the P protein to the T protein. This is Glycine cleavage system H protein from Chlorobium phaeobacteroides (strain BS1).